We begin with the raw amino-acid sequence, 183 residues long: Threonylcarbamoyl-AMP synthase (183 aa).

Residues 1–183 (MNITQIIEKL…LFTNQLVRQG (183 aa)) enclose the YrdC-like domain.

Belongs to the SUA5 family. TsaC subfamily.

Its subcellular location is the cytoplasm. It catalyses the reaction L-threonine + hydrogencarbonate + ATP = L-threonylcarbamoyladenylate + diphosphate + H2O. In terms of biological role, required for the formation of a threonylcarbamoyl group on adenosine at position 37 (t(6)A37) in tRNAs that read codons beginning with adenine. Catalyzes the conversion of L-threonine, HCO(3)(-)/CO(2) and ATP to give threonylcarbamoyl-AMP (TC-AMP) as the acyladenylate intermediate, with the release of diphosphate. This chain is Threonylcarbamoyl-AMP synthase, found in Histophilus somni (strain 2336) (Haemophilus somnus).